Here is a 374-residue protein sequence, read N- to C-terminus: Methylthioribose-1-phosphate isomerase (374 aa).

Aspartate 251 functions as the Proton donor in the catalytic mechanism.

Belongs to the eIF-2B alpha/beta/delta subunits family. MtnA subfamily.

Its subcellular location is the cytoplasm. It localises to the nucleus. The enzyme catalyses 5-(methylsulfanyl)-alpha-D-ribose 1-phosphate = 5-(methylsulfanyl)-D-ribulose 1-phosphate. The protein operates within amino-acid biosynthesis; L-methionine biosynthesis via salvage pathway; L-methionine from S-methyl-5-thio-alpha-D-ribose 1-phosphate: step 1/6. In terms of biological role, catalyzes the interconversion of methylthioribose-1-phosphate (MTR-1-P) into methylthioribulose-1-phosphate (MTRu-1-P). The chain is Methylthioribose-1-phosphate isomerase (IDI2) from Oryza sativa subsp. japonica (Rice).